The chain runs to 1756 residues: MNSLFRKRNKGKYSPTVQTRSISNKELSELIEQLQKNADQVEKNIVDTEAKMQSDLARLQEGRQPEHRDVTLQKVLDSEKLLYVLEADAAIAKHMKHPQGDMIAEDIRQLKERVTNLRGKHKQIYRLAVKEVDPQVNWAALVEEKLDKLNNQSFGTDLPLVDHQVEEHNIFHNEVKAIGPHLAKDGDKEQNSELRAKYQKLLAASQARQQHLSSLQDYMQRCTNELYWLDQQAKGRMQYDWSDRNLDYPSRRRQYENFINRNLEAKEERINKLHSEGDQLLAAEHPGRNSIEAHMEAVHADWKEYLNLLICEESHLKYMEDYHQFHEDVKDAQELLRKVDSDLNQKYGPDFKDRYQIELLLRELDDQEKVLDKYEDVVQGLQKRGQQVVPLKYRRETPLKPIPVEALCDFEGEQGLISRGYSYTLQKNNGESWELMDSAGNKLIAPAVCFVIPPTDPEALALADSLGSQYRSVRQKAAGSKRTLQQRYEVLKTENPGDASDLQGRQLLAGLDKVASDLDRQEKAITGILRPPLEQGRAVQDSAERAKDLKNITNELLRIEPEKTRSTAEGEAFIQALPGSGTTPLLRTRVEDTNRKYEHLLQLLDLAQEKVDVANRLEKSLQQSWELLATHENHLNQDDTVPESSRVLDSKGQELAAMACELQAQKSLLGEVEQNLQAAKQCSSTLASRFQEHCPDLERQEAEVHKLGQRFNNLRQQVERRAQSLQSAKAAYEHFHRGHDHVLQFLVSIPSYEPQETDSLSQMETKLKNQKNLLDEIASREQEVQKICANSQQYQQAVKDYELEAEKLRSLLDLENGRRSHVSKRARLQSPATKVKEEEAALAAKFTEVYAINRQRLQNLEFALNLLRQQPEVEVTHETLQRNRPDSGVEEAWKIRKELDEETERRRQLENEVKSTQEEIWTLRNQGPQESVVRKEVLKKVPDPVLEESFQQLQRTLAEEQHKNQLLQEELEALQLQLRALEQETRDGGQEYVVKEVLRIEPDRAQADEVLQLREELEALRRQKGAREAEVLLLQQRVAALAEEKSRAQEKVTEKEVVKLQNDPQLEAEYQQLQEDHQRQDQLREKQEEELSFLQDKLKRLEKERAMAEGKITVKEVLKVEKDAATEREVSDLTRQYEDEAAKARASQREKTELLRKIWALEEENAKVVVQEKVREIVRPDPKAESEVANLRLELVEQERKYRGAEEQLRSYQSELEALRRRGPQVEVKEVTKEVIKYKTDPEMEKELQRLREEIVDKTRLIERCDLEIYQLKKEIQALKDTKPQVQTKEVVQEILQFQEDPQTKEEVASLRAKLSEEQKKQVDLERERASQEEQIARKEEELSRVKERVVQQEVVRYEEEPGLRAEASAFAESIDVELRQIDKLRAELRRLQRRRTELERQLEELERERQARREAEREVQRLQQRLAALEQEEAEAREKVTHTQKVVLQQDPQQAREHALLRLQLEEEQHRRQLLEGELETLRRKLAALEKAEVKEKVVLSESVQVEKGDTEQEIQRLKSSLEEESRSKRELDVEVSRLEARLSELEFHNSKSSKELDFLREENHKLQLERQNLQLETRRLQSEINMAATETRDLRNMTVADSGTNHDSRLWSLERELDDLKRLSKDKDLEIDELQKRLGSVAVKREQRENHLRRSIVVIHPDTGRELSPEEAHRAGLIDWNMFVKLRSQECDWEEISVKGPNGESSVIHDRKSGKKFSIEEALQSGRLTPAQYDRYVNKDMSIQELAVLVSGQK.

S14 is subject to Phosphoserine. 2 coiled-coil regions span residues 16–125 (TVQT…KQIY) and 188–389 (KEQN…QQVV). Spectrin repeat units lie at residues 216–317 (QDYM…SHLK), 323–485 (HQFH…RTLQ), 505–612 (RQLL…EKVD), and 733–861 (EHFH…QNLE). The 57-residue stretch at 399–455 (LKPIPVEALCDFEGEQGLISRGYSYTLQKNNGESWELMDSAGNKLIAPAVCFVIPPT) folds into the SH3 domain. Position 465 is a phosphoserine (S465). Coiled-coil stretches lie at residues 585-820 (LLRT…GRRS) and 886-1645 (DSGV…SVAV). Residues S887, S949, S1584, and S1657 each carry the phosphoserine modification. The interval 1557 to 1756 (ELDFLREENH…ELAVLVSGQK (200 aa)) is interacts with BFSP2 and VIM. Plectin repeat units follow at residues 1651 to 1685 (ENHL…WNMF) and 1700 to 1735 (VKGP…PAQY).

This sequence belongs to the plakin or cytolinker family. In terms of assembly, homodimer or a heterodimer with EVPL. Found in a complex composed of PPL (via C-terminal linker domain), BFSP1 and BFSP2 in the retinal lens. Within the complex interacts (via C-terminal linker domain) with BFSP2. Interacts with VIM. Binds to the PH domain of AKT1. Interacts with FCGR1A. May interact with PPHLN1. As to expression, expressed in stratified squamous epithelia and in some other epithelia.

Its subcellular location is the cell junction. The protein localises to the desmosome. It is found in the cytoplasm. The protein resides in the cytoskeleton. It localises to the cell membrane. Functionally, component of the cornified envelope of keratinocytes. May link the cornified envelope to desmosomes and intermediate filaments. May act as a localization signal in PKB/AKT-mediated signaling. This is Periplakin (PPL) from Homo sapiens (Human).